Reading from the N-terminus, the 351-residue chain is Mannonate dehydratase (351 aa).

The protein belongs to the mannonate dehydratase family. The cofactor is Fe(2+). Mn(2+) is required as a cofactor.

The catalysed reaction is D-mannonate = 2-dehydro-3-deoxy-D-gluconate + H2O. Its pathway is carbohydrate metabolism; pentose and glucuronate interconversion. Functionally, catalyzes the dehydration of D-mannonate. The chain is Mannonate dehydratase from Clostridium acetobutylicum (strain ATCC 824 / DSM 792 / JCM 1419 / IAM 19013 / LMG 5710 / NBRC 13948 / NRRL B-527 / VKM B-1787 / 2291 / W).